Consider the following 240-residue polypeptide: Purine nucleoside phosphorylase DeoD-type (240 aa).

Histidine 5 serves as a coordination point for a purine D-ribonucleoside. Phosphate is bound by residues glycine 21, arginine 25, arginine 44, and 88–91 (RVGS). A purine D-ribonucleoside is bound by residues 181–183 (EME) and 205–206 (SD). Aspartate 206 acts as the Proton donor in catalysis.

It belongs to the PNP/UDP phosphorylase family. In terms of assembly, homohexamer; trimer of homodimers.

It carries out the reaction a purine D-ribonucleoside + phosphate = a purine nucleobase + alpha-D-ribose 1-phosphate. The enzyme catalyses a purine 2'-deoxy-D-ribonucleoside + phosphate = a purine nucleobase + 2-deoxy-alpha-D-ribose 1-phosphate. Functionally, catalyzes the reversible phosphorolytic breakdown of the N-glycosidic bond in the beta-(deoxy)ribonucleoside molecules, with the formation of the corresponding free purine bases and pentose-1-phosphate. This chain is Purine nucleoside phosphorylase DeoD-type, found in Enterobacter sp. (strain 638).